A 453-amino-acid polypeptide reads, in one-letter code: Ribosomal protein uS12 methylthiotransferase RimO (453 aa).

One can recognise an MTTase N-terminal domain in the interval 6–116; sequence PTVGIVSLGC…VLTAVHEAIA (111 aa). [4Fe-4S] cluster is bound by residues Cys-15, Cys-51, Cys-80, Cys-148, Cys-152, and Cys-155. In terms of domain architecture, Radical SAM core spans 134–371; it reads LTPKHFAYLK…MQLQQQISAN (238 aa). A TRAM domain is found at 374–440; the sequence is QAKIGKTIQV…EYDLWATPVG (67 aa).

Belongs to the methylthiotransferase family. RimO subfamily. The cofactor is [4Fe-4S] cluster.

It is found in the cytoplasm. The enzyme catalyses L-aspartate(89)-[ribosomal protein uS12]-hydrogen + (sulfur carrier)-SH + AH2 + 2 S-adenosyl-L-methionine = 3-methylsulfanyl-L-aspartate(89)-[ribosomal protein uS12]-hydrogen + (sulfur carrier)-H + 5'-deoxyadenosine + L-methionine + A + S-adenosyl-L-homocysteine + 2 H(+). Functionally, catalyzes the methylthiolation of an aspartic acid residue of ribosomal protein uS12. The protein is Ribosomal protein uS12 methylthiotransferase RimO of Hydrogenovibrio crunogenus (strain DSM 25203 / XCL-2) (Thiomicrospira crunogena).